Consider the following 360-residue polypeptide: Carbamoyl phosphate synthase small chain (360 aa).

A CPSase region spans residues 1–169 (MTKRLLILED…TKTAYPAPGI (169 aa)). 3 residues coordinate L-glutamine: S46, G220, and G222. In terms of domain architecture, Glutamine amidotransferase type-1 spans 172–358 (NIVLVDFGLK…LEMIDSWRCT (187 aa)). The active-site Nucleophile is C247. L-glutamine-binding residues include M248, Q251, N289, G291, and Y292. Catalysis depends on residues H331 and D333.

The protein belongs to the CarA family. In terms of assembly, composed of two chains; the small (or glutamine) chain promotes the hydrolysis of glutamine to ammonia, which is used by the large (or ammonia) chain to synthesize carbamoyl phosphate. Tetramer of heterodimers (alpha,beta)4.

It carries out the reaction hydrogencarbonate + L-glutamine + 2 ATP + H2O = carbamoyl phosphate + L-glutamate + 2 ADP + phosphate + 2 H(+). It catalyses the reaction L-glutamine + H2O = L-glutamate + NH4(+). It functions in the pathway amino-acid biosynthesis; L-arginine biosynthesis; carbamoyl phosphate from bicarbonate: step 1/1. Its pathway is pyrimidine metabolism; UMP biosynthesis via de novo pathway; (S)-dihydroorotate from bicarbonate: step 1/3. In terms of biological role, small subunit of the glutamine-dependent carbamoyl phosphate synthetase (CPSase). CPSase catalyzes the formation of carbamoyl phosphate from the ammonia moiety of glutamine, carbonate, and phosphate donated by ATP, constituting the first step of 2 biosynthetic pathways, one leading to arginine and/or urea and the other to pyrimidine nucleotides. The small subunit (glutamine amidotransferase) binds and cleaves glutamine to supply the large subunit with the substrate ammonia. This Streptococcus pyogenes serotype M18 (strain MGAS8232) protein is Carbamoyl phosphate synthase small chain.